The chain runs to 397 residues: MGFRKILASKSHHSRHHNQHHKNLKLQNHRYVLISNITGSHETKYLSPFRMDNCSGSRRRDRLHVKLKSLRNKIHKQLHPNCRFDDATKTSDDKCVSYEVPERDGLATISLEEVFPKSNRCQIPEENLGETDSVIHRDLGNFANENDYPQWRKVESQYNLENVQPEEDEIVDRLRSEIRSTKLKSVKTTSRTLEKAIEARCTGKRVLQQLSCQSNQLTKIESNCDMLKIQSNVADRKIDELAHENRSLLALKSPNPFRKKREREKRDQIYNLKLKHRHLQQETMKRAQDSDKNLAINLSSEYGRYGQGVERQRILRDAQKYQFEADEEDNQMEIDLYGNLEQIKAVSGDLKIMAHAFGREFEAQNTRMFDIENNVQQADNALQAKRYRLEKVIGKRW.

Positions 1-26 (MGFRKILASKSHHSRHHNQHHKNLKL) are disordered. The tract at residues 4 to 50 (RKILASKSHHSRHHNQHHKNLKLQNHRYVLISNITGSHETKYLSPFR) is inhibitory region. Basic residues predominate over residues 10–26 (KSHHSRHHNQHHKNLKL). The positive regulatory region stretch occupies residues 51–95 (MDNCSGSRRRDRLHVKLKSLRNKIHKQLHPNCRFDDATKTSDDKC). Residues 330 to 392 (NQMEIDLYGN…QAKRYRLEKV (63 aa)) form the t-SNARE coiled-coil homology domain.

This sequence belongs to the SNAP-25 family. Interacts with the t-SNARE SSO1 and the v-SNARE SNC2.

Its subcellular location is the cell membrane. The protein localises to the prospore membrane. Required to maintain the prospore membrane to the nucleus during sporulation in order to capture the daughter nuclei and form the spores. Mediates the fusion of exocytic vesicles with the plasma membrane during sporulation through its interactions with the t-SNARE SSO1 and v-SNARE SNC2. The polypeptide is Sporulation-specific protein 20 (SPO20) (Saccharomyces cerevisiae (strain ATCC 204508 / S288c) (Baker's yeast)).